The chain runs to 435 residues: GTPase Obg (435 aa).

Residues 6 to 164 form the Obg domain; sequence ADFVDRVKIF…RWLELELKIL (159 aa). Residues 165–335 enclose the OBG-type G domain; that stretch reads ADVGLVGYPN…LVSKLASIVR (171 aa). GTP contacts are provided by residues 171–178, 196–200, 217–220, 287–290, and 316–318; these read GYPNVGKS, FTTLI, DIPG, NKID, and SAL. Residues Ser-178 and Thr-198 each contribute to the Mg(2+) site. Residues 357-435 enclose the OCT domain; that stretch reads RRLPEKFHLE…IGDFEFEYRE (79 aa).

This sequence belongs to the TRAFAC class OBG-HflX-like GTPase superfamily. OBG GTPase family. As to quaternary structure, monomer. Requires Mg(2+) as cofactor.

The protein resides in the cytoplasm. An essential GTPase which binds GTP, GDP and possibly (p)ppGpp with moderate affinity, with high nucleotide exchange rates and a fairly low GTP hydrolysis rate. Plays a role in control of the cell cycle, stress response, ribosome biogenesis and in those bacteria that undergo differentiation, in morphogenesis control. In Thermotoga sp. (strain RQ2), this protein is GTPase Obg.